The sequence spans 92 residues: Secreted RxLR effector protein RXLR-C02 (92 aa).

Residues 1–21 (MQFHLLVMTTIAASFAATGSA) form the signal peptide. Residues 48–51 (RALR) carry the RxLR motif. The segment at 54 to 75 (ENRGLIGDDSDSSISDSDSEAK) is disordered.

Belongs to the RxLR effector family.

The protein localises to the secreted. It localises to the host cytoplasm. It is found in the host nucleus. Functionally, secreted effector that suppresses pattern-triggered immunity (PTI) in plant host. The polypeptide is Secreted RxLR effector protein RXLR-C02 (Plasmopara halstedii (Downy mildew of sunflower)).